The primary structure comprises 287 residues: Efem/EfeO family lipoprotein (287 aa).

The first 17 residues, Met1–Ala17, serve as a signal peptide directing secretion. Cys18 carries N-palmitoyl cysteine lipidation. A lipid anchor (S-diacylglycerol cysteine) is attached at Cys18. The segment at Asn20–Lys50 is disordered. The span at His23–Gln33 shows a compositional bias: basic and acidic residues.

It belongs to the EfeM/EfeO family.

Its subcellular location is the cell membrane. The sequence is that of Efem/EfeO family lipoprotein from Staphylococcus haemolyticus (strain JCSC1435).